The sequence spans 794 residues: MPSHCSSLLCARFRLSSLAVIVALAASGVRAEGAGSSPSAAEIDWRPRSELPPEVAGRLPVFCEGGYLPGTVGGDGAVVPGEGIEGSMPLEASALNARYELDSELYLQGDVRLRQGPFQATGAEARYNQQSGELQLQGPLVSRGEGFLLTGQDANYSTQSGQLDINTATFLLHESELRGEASSLSRVSESQVVISDGMITTCGPGQNDWSIVASDIELDQAEGFGTARHVRLEVLDAPVFYWPYITFPIDDRRKTGFLYPQFGSSSAGSGAYLALPYYLNLAPHYDATLTPQYIHGRGLFTEVEGRYLSQYGESVLQLGYIDNDSAFRDENPGENGERWALDFTTRAAFGGGWSGYGDYSVISDEDYLSDLNRSLEIDQATHLQRRGGVRYYGANQYFETYLNGYQTIPDRIADVDKPYAQLPEVIYGGSLEAGWLEASLESQYTWFYRDNENLTGLDKANGQRLRAIPELALPMRALWGFSRPSVSLDYTRYELDDYTLGDAGFDRTVPVFEWDNGLYFDRRSSLFDVPYNQTLEPRLYYAWADAESDQNYIPDFDTGIRSFRFDQLFRRDRFTGGDRVGDANQLTVALTSRFNDLLTGAERARVSVGQVRYFEDREVDLFGEGASDRSRSPLAGELVLNPIDNLELRSSLLWDHETRKTEEGRSQLIFHSEDYRYLATLGHTYSRPDELEQTDIGTVFPVTDQVSAIGRWVWDSELDRTVGTLAGLEYNNCCWSFQVVHQNYLTDDEELDTRLLFRIELKGLGGSGGASDNIADAIYGYDERERRRFGNPRR.

The N-terminal stretch at 1–31 is a signal peptide; the sequence is MPSHCSSLLCARFRLSSLAVIVALAASGVRA.

The protein belongs to the LptD family. In terms of assembly, component of the lipopolysaccharide transport and assembly complex. Interacts with LptE and LptA.

It is found in the cell outer membrane. Its function is as follows. Together with LptE, is involved in the assembly of lipopolysaccharide (LPS) at the surface of the outer membrane. This Marinobacter nauticus (strain ATCC 700491 / DSM 11845 / VT8) (Marinobacter aquaeolei) protein is LPS-assembly protein LptD.